A 260-amino-acid polypeptide reads, in one-letter code: Chloride intracellular channel Clic (260 aa).

Residues F42–V66 form a helical membrane-spanning segment.

Belongs to the chloride channel CLIC family. Expressed in cardiac tubes.

Its subcellular location is the mitochondrion. The protein resides in the membrane. Its function is as follows. Might insert into membranes and form chloride ion channels. Channel activity depends on the pH. May play a role in ethanol sensitivity. The chain is Chloride intracellular channel Clic from Drosophila melanogaster (Fruit fly).